The chain runs to 758 residues: 3-isopropylmalate dehydratase (758 aa).

[4Fe-4S] cluster contacts are provided by Cys359, Cys420, and Cys423. Phosphoserine is present on residues Ser486 and Ser488.

Belongs to the aconitase/IPM isomerase family. Requires [4Fe-4S] cluster as cofactor.

The catalysed reaction is (2R,3S)-3-isopropylmalate = (2S)-2-isopropylmalate. Its pathway is amino-acid biosynthesis; L-leucine biosynthesis; L-leucine from 3-methyl-2-oxobutanoate: step 2/4. Catalyzes the isomerization between 2-isopropylmalate and 3-isopropylmalate, via the formation of 2-isopropylmaleate. The polypeptide is 3-isopropylmalate dehydratase (leu2) (Schizosaccharomyces pombe (strain 972 / ATCC 24843) (Fission yeast)).